A 385-amino-acid chain; its full sequence is GTPase Obg (385 aa).

The Obg domain maps to 1–159 (MKFVDEATIL…REIQLELMLL (159 aa)). In terms of domain architecture, OBG-type G spans 160–333 (ADVGMLGLPN…LCWDVMAFIN (174 aa)). Residues 166-173 (GLPNAGKS), 191-195 (FTTLV), 213-216 (DIPG), 283-286 (NKAD), and 314-316 (SAA) each bind GTP. The Mg(2+) site is built by Ser-173 and Thr-193. Over residues 362-379 (QQEEAEETLDDDWDEDGV) the composition is skewed to acidic residues. Positions 362-385 (QQEEAEETLDDDWDEDGVETIYQR) are disordered.

Belongs to the TRAFAC class OBG-HflX-like GTPase superfamily. OBG GTPase family. Monomer. It depends on Mg(2+) as a cofactor.

The protein localises to the cytoplasm. Its function is as follows. An essential GTPase which binds GTP, GDP and possibly (p)ppGpp with moderate affinity, with high nucleotide exchange rates and a fairly low GTP hydrolysis rate. Plays a role in control of the cell cycle, stress response, ribosome biogenesis and in those bacteria that undergo differentiation, in morphogenesis control. The chain is GTPase Obg from Sodalis glossinidius (strain morsitans).